The primary structure comprises 156 residues: Small ribosomal subunit protein uS7 (156 aa).

It belongs to the universal ribosomal protein uS7 family. As to quaternary structure, part of the 30S ribosomal subunit. Contacts proteins S9 and S11.

One of the primary rRNA binding proteins, it binds directly to 16S rRNA where it nucleates assembly of the head domain of the 30S subunit. Is located at the subunit interface close to the decoding center, probably blocks exit of the E-site tRNA. This chain is Small ribosomal subunit protein uS7, found in Oceanobacillus iheyensis (strain DSM 14371 / CIP 107618 / JCM 11309 / KCTC 3954 / HTE831).